A 490-amino-acid polypeptide reads, in one-letter code: Argininosuccinate lyase (490 aa).

The protein belongs to the lyase 1 family. Argininosuccinate lyase subfamily.

The protein resides in the cytoplasm. The catalysed reaction is 2-(N(omega)-L-arginino)succinate = fumarate + L-arginine. Its pathway is amino-acid biosynthesis; L-arginine biosynthesis; L-arginine from L-ornithine and carbamoyl phosphate: step 3/3. The chain is Argininosuccinate lyase from Bifidobacterium longum subsp. infantis (strain ATCC 15697 / DSM 20088 / JCM 1222 / NCTC 11817 / S12).